The primary structure comprises 314 residues: Homoserine kinase (314 aa).

95–105 (PHSRGLGSSAS) lines the ATP pocket.

It belongs to the GHMP kinase family. Homoserine kinase subfamily.

The protein localises to the cytoplasm. It carries out the reaction L-homoserine + ATP = O-phospho-L-homoserine + ADP + H(+). It participates in amino-acid biosynthesis; L-threonine biosynthesis; L-threonine from L-aspartate: step 4/5. In terms of biological role, catalyzes the ATP-dependent phosphorylation of L-homoserine to L-homoserine phosphate. The protein is Homoserine kinase of Mycobacterium ulcerans (strain Agy99).